The following is a 521-amino-acid chain: FAD-dependent monooxygenase mdpD (521 aa).

The interval 1–48 (MTHFPVNIASDKQEFDPERWAKTPTTESSVNGENGTAPTSGLPSRHPS) is disordered. The segment covering 11 to 21 (DKQEFDPERWA) has biased composition (basic and acidic residues). Positions 23-48 (TPTTESSVNGENGTAPTSGLPSRHPS) are enriched in polar residues. Val94 and Arg160 together coordinate FAD. Catalysis depends on residues Arg244 and Tyr271. Residues Asp369 and Gly382 each contribute to the FAD site.

This sequence belongs to the paxM FAD-dependent monooxygenase family. FAD is required as a cofactor.

It participates in secondary metabolite biosynthesis. Functionally, FAD-dependent monooxygenase; part of the gene cluster that mediates the biosynthesis of monodictyphenone, a prenyl xanthone derivative. The pathway begins with the synthesis of atrochrysone thioester by the polyketide synthase (PKS) mdpG. The atrochrysone carboxyl ACP thioesterase mdpF then breaks the thioester bond and releases the atrochrysone carboxylic acid from mdpG. The atrochrysone carboxylic acid is then converted to atrochrysone which is further transformed into emodin anthrone. The next step is performed by the anthrone oxygenase mdpH that catalyzes the oxidation of emodinanthrone to emodin. Emodin is further modified to yield monodictyphenone via several steps involving mdpB, mdpC mdpJ, mdpK and mdpL. These enzymes with xptA, xptB and xptC are also proposed to be involved in the synthesis of shamixanthone from emodin. Especially, direct reduction of emodin by the short chain dehydrogenase mdpC followed by dehydration catalyzed by the scytalone dehydratase-like protein mdpB gives loss of oxygen and formation of chrysophanol intermediate in two simple steps. The chain is FAD-dependent monooxygenase mdpD from Emericella nidulans (strain FGSC A4 / ATCC 38163 / CBS 112.46 / NRRL 194 / M139) (Aspergillus nidulans).